An 846-amino-acid polypeptide reads, in one-letter code: Enhancer of polycomb-like protein 1 (846 aa).

Disordered stretches follow at residues 169–204 (FNSKAEGSSGDVKSDKEQGRGMRVKGKDREKEKGDA), 391–466 (TSDE…APDA), 587–607 (EKKRPRSIDEVEEEMQEQSPK), 682–702 (AADAKPPPAPIFQKPPAPQPN), and 759–804 (QVQA…GVKQ). Over residues 180 to 203 (VKSDKEQGRGMRVKGKDREKEKGD) the composition is skewed to basic and acidic residues. Residues 411-426 (PSLSGQTPLTSGQSSS) are compositionally biased toward polar residues. The span at 432 to 452 (TDKDREERAQRERYDAQRNAE) shows a compositional bias: basic and acidic residues. Residues 434-490 (KDREERAQRERYDAQRNAERSGILSGRSNAPDALKERLQALQQKTEEMLARKKEQDA) are a coiled coil. Positions 686–702 (KPPPAPIFQKPPAPQPN) are enriched in pro residues. Low complexity predominate over residues 759–773 (QVQAQGQGHPQAHLQ). A compositionally biased stretch (polar residues) spans 783–796 (NGVNSPMPNGQQML).

The protein belongs to the enhancer of polycomb family. In terms of assembly, component of the NuA4 histone acetyltransferase complex.

Its subcellular location is the nucleus. In terms of biological role, component of the NuA4 histone acetyltransferase complex which is involved in transcriptional activation of selected genes principally by acetylation of nucleosomal histone H4 and H2A. The NuA4 complex is also involved in DNA repair. Involved in gene silencing by neighboring heterochromatin, blockage of the silencing spreading along the chromosome, and required for cell cycle progression through G2/M. In Cryptococcus neoformans var. neoformans serotype D (strain JEC21 / ATCC MYA-565) (Filobasidiella neoformans), this protein is Enhancer of polycomb-like protein 1 (EPL1).